Here is a 65-residue protein sequence, read N- to C-terminus: Large ribosomal subunit protein bL35 (65 aa).

The protein belongs to the bacterial ribosomal protein bL35 family.

In Polynucleobacter asymbioticus (strain DSM 18221 / CIP 109841 / QLW-P1DMWA-1) (Polynucleobacter necessarius subsp. asymbioticus), this protein is Large ribosomal subunit protein bL35.